A 1070-amino-acid polypeptide reads, in one-letter code: DNA-directed RNA polymerase subunit beta (1070 aa).

The protein belongs to the RNA polymerase beta chain family. In terms of assembly, in plastids the minimal PEP RNA polymerase catalytic core is composed of four subunits: alpha, beta, beta', and beta''. When a (nuclear-encoded) sigma factor is associated with the core the holoenzyme is formed, which can initiate transcription.

It is found in the plastid. The protein localises to the chloroplast. The catalysed reaction is RNA(n) + a ribonucleoside 5'-triphosphate = RNA(n+1) + diphosphate. Its function is as follows. DNA-dependent RNA polymerase catalyzes the transcription of DNA into RNA using the four ribonucleoside triphosphates as substrates. This Phalaenopsis aphrodite subsp. formosana (Moth orchid) protein is DNA-directed RNA polymerase subunit beta.